We begin with the raw amino-acid sequence, 64 residues long: Conotoxin Vc1.3 (64 aa).

The N-terminal stretch at 1-21 (MGMRMMFTVFLLVVLATTVVS) is a signal peptide. Residues 22–43 (FTSDRASDGRKAAASDLITLTI) constitute a propeptide that is removed on maturation. 2 disulfides stabilise this stretch: Cys-46–Cys-52 and Cys-47–Cys-60. Cys-60 carries the cysteine amide modification.

It belongs to the conotoxin A superfamily. Expressed by the venom duct.

Its subcellular location is the secreted. Functionally, may act as a toxin. The sequence is that of Conotoxin Vc1.3 from Conus victoriae (Queen Victoria cone).